A 485-amino-acid polypeptide reads, in one-letter code: Aspartyl/glutamyl-tRNA(Asn/Gln) amidotransferase subunit B (485 aa).

This sequence belongs to the GatB/GatE family. GatB subfamily. As to quaternary structure, heterotrimer of A, B and C subunits.

It carries out the reaction L-glutamyl-tRNA(Gln) + L-glutamine + ATP + H2O = L-glutaminyl-tRNA(Gln) + L-glutamate + ADP + phosphate + H(+). The catalysed reaction is L-aspartyl-tRNA(Asn) + L-glutamine + ATP + H2O = L-asparaginyl-tRNA(Asn) + L-glutamate + ADP + phosphate + 2 H(+). Allows the formation of correctly charged Asn-tRNA(Asn) or Gln-tRNA(Gln) through the transamidation of misacylated Asp-tRNA(Asn) or Glu-tRNA(Gln) in organisms which lack either or both of asparaginyl-tRNA or glutaminyl-tRNA synthetases. The reaction takes place in the presence of glutamine and ATP through an activated phospho-Asp-tRNA(Asn) or phospho-Glu-tRNA(Gln). This is Aspartyl/glutamyl-tRNA(Asn/Gln) amidotransferase subunit B from Anaplasma marginale (strain St. Maries).